We begin with the raw amino-acid sequence, 262 residues long: Capsid protein (262 aa).

The disordered stretch occupies residues 183 to 262 (APTIEAITRP…SHHRSPSPRK (80 aa)). The Bipartite nuclear localization signal motif lies at 215-233 (RRRKVKTTVVYGRRRSKSR). Over residues 215–234 (RRRKVKTTVVYGRRRSKSRE) the composition is skewed to basic residues. A phosphoserine; by host mark is found at S232 and S245. Over residues 252 to 262 (SSHHRSPSPRK) the composition is skewed to basic residues. An RNA binding region spans residues 254–260 (HHRSPSP).

The protein belongs to the avihepadnavirus core antigen family. In terms of assembly, homodimerizes, then multimerizes.

It localises to the virion. Its subcellular location is the host cytoplasm. Self assembles to form an icosahedral capsid. Most capsid appear to be large particles with an icosahedral symmetry of T=4 and consist of 240 copies of capsid protein, though a fraction forms smaller T=3 particles consisting of 180 capsid proteins. Entering capsid are transported along microtubules to the nucleus. Phosphorylation of the capsid is thought to induce exposure of nuclear localization signal in the C-terminal portion of the capsid protein that allows binding to the nuclear pore complex via the importin (karyopherin-) alpha and beta. Capsids are imported in intact form through the nuclear pore into the nuclear basket, where it probably binds NUP153. Only capsids that contain the mature viral genome can release the viral DNA and capsid protein into the nucleoplasm. Immature capsids get stucked in the basket. Capsids encapsulate the pre-genomic RNA and the P protein. Pre-genomic RNA is reverse transcribed into DNA while the capsid is still in the cytoplasm. The capsid can then either be directed to the nucleus, providing more genome for transcription, or bud through the endoplasmic reticulum to provide new virions. The protein is Capsid protein (C) of Anas (ducks).